The primary structure comprises 460 residues: G2/mitotic-specific cyclin-4 (460 aa).

This sequence belongs to the cyclin family. Cyclin AB subfamily.

Functionally, essential for the control of the cell cycle at the G2/M (mitosis) transition. Interacts with the CDC2 protein kinase to form MPF. G2/M cyclins accumulate steadily during G2 and are abruptly destroyed at mitosis. The sequence is that of G2/mitotic-specific cyclin-4 (CLB4) from Saccharomyces cerevisiae (strain ATCC 204508 / S288c) (Baker's yeast).